Here is a 162-residue protein sequence, read N- to C-terminus: Caveolin-2 (162 aa).

At 1–86 (MGLETEKADV…FEISKYVMYK (86 aa)) the chain is on the cytoplasmic side. Tyr-19 is subject to Phosphotyrosine; by SRC. 2 positions are modified to phosphoserine: Ser-20 and Ser-23. A Phosphotyrosine modification is found at Tyr-27. Ser-36 is subject to Phosphoserine. The helical intramembrane region spans 87–107 (FLTVFLAIPLAFIAGILFATL). Over 108–162 (SCLHIWILMPFVKTCLMVLPSVQTIWKSVTDVVIGPLCTSVGRSFSSVSMQLSHD) the chain is Cytoplasmic.

It belongs to the caveolin family. As to quaternary structure, monomer or homodimer. Interacts with CAV1; the interaction forms a stable heterooligomeric complex that is required for targeting to lipid rafts and for caveolae formation. Tyrosine phosphorylated forms do not form heterooligomers with the Tyr-19-phosphorylated form existing as a monomer or dimer, and the Tyr-27-form as a monomer only. Interacts (tyrosine phosphorylated form) with the SH2 domain-containing proteins, RASA1, NCK1 and SRC. Interacts (tyrosine phosphorylated form) with INSR, the interaction (Tyr-27-phosphorylated form) is increased on insulin stimulation. Interacts (Tyr-19 phosphorylated form) with MAPK1 (phosphorylated form); the interaction, promoted by insulin, leads to nuclear location and MAPK1 activation. Interacts with STAT3; the interaction is increased on insulin-induced tyrosine phosphorylation leading to STAT activation. In terms of processing, phosphorylated on serine and tyrosine residues. CAV1 promotes phosphorylation on Ser-23 which then targets the complex to the plasma membrane, lipid rafts and caveolae. Phosphorylation on Ser-36 appears to modulate mitosis in endothelial cells. Phosphorylation on both Tyr-19 and Tyr-27 is required for insulin-induced 'Ser-727' phosphorylation of STAT3 and its activation. Phosphorylation on Tyr-19 is required for insulin-induced phosphorylation of MAPK1 and DNA binding of STAT3. Tyrosine phosphorylation is induced by both EGF and insulin.

Its subcellular location is the nucleus. The protein resides in the cytoplasm. The protein localises to the golgi apparatus membrane. It localises to the cell membrane. It is found in the membrane. Its subcellular location is the caveola. Its function is as follows. May act as a scaffolding protein within caveolar membranes. Interacts directly with G-protein alpha subunits and can functionally regulate their activity. Acts as an accessory protein in conjunction with CAV1 in targeting to lipid rafts and driving caveolae formation. The Ser-36 phosphorylated form has a role in modulating mitosis in endothelial cells. Positive regulator of cellular mitogenesis of the MAPK signaling pathway. Required for the insulin-stimulated nuclear translocation and activation of MAPK1 and STAT3, and the subsequent regulation of cell cycle progression. The sequence is that of Caveolin-2 (Cav2) from Mus musculus (Mouse).